We begin with the raw amino-acid sequence, 1364 residues long: Outer kinetochore KNL1 complex subunit spc7 (1364 aa).

A compositionally biased stretch (polar residues) spans 1 to 15; the sequence is MPTSPRRNSIATTDN. Disordered regions lie at residues 1–36, 124–190, and 202–223; these read MPTS…GALQ, YPKD…DIAS, and EALN…LSIQ. Basic and acidic residues predominate over residues 124 to 136; sequence YPKDHQSDSEKST. The segment covering 157–169 has biased composition (polar residues); it reads GPTTTSFSRNETQ. The span at 170-181 shows a compositional bias: low complexity; it reads SSPHSHSASIIS. An MELT; degenerate motif is present at residues 254 to 257; it reads MDLT. Thr257 is subject to Phosphothreonine; by mph1. The interval 289-334 is disordered; the sequence is ASHDPSNQTQLSSPNKSSSPTSIEISDFSKNNENHDQSENKEEEED. Residues 300–310 show a composition bias toward low complexity; sequence SSPNKSSSPTS. Positions 318–328 are enriched in basic and acidic residues; sequence KNNENHDQSEN. Positions 450–453 match the MELT; degenerate motif; sequence MDLT. Thr453 carries the phosphothreonine; by mph1 modification. The disordered stretch occupies residues 456 to 503; it reads ISSTNAPTHLNEDDLNQFTSNISSSSKPRKDNNKTANSSKPIPDSEDF. Positions 471–481 are enriched in polar residues; the sequence is NQFTSNISSSS. Positions 504 to 507 match the MELT; degenerate motif; it reads MDIT. Thr507 carries the post-translational modification Phosphothreonine; by mph1. Disordered regions lie at residues 564–643 and 697–837; these read LPSA…SSFD and GATP…GVSN. Basic and acidic residues predominate over residues 566 to 585; sequence SADKENAEREEIPSYSDKSE. Positions 586 to 617 are enriched in polar residues; the sequence is NFNTTSFTNHERSPNGNNNLKFSKDPNSSSPS. A compositionally biased stretch (basic and acidic residues) spans 719 to 730; that stretch reads EVSRQPTDDKGE. Residues 747–773 show a composition bias toward polar residues; sequence LTIQQTNEIKHVPTNTTSSVKLPQQPS. Over residues 791-802 the composition is skewed to basic and acidic residues; the sequence is SLERLESQEPNR. A compositionally biased stretch (polar residues) spans 808–820; it reads VGSSNAGNTTSVG. Residues 1075–1155 adopt a coiled-coil conformation; the sequence is LAQAQEKLEK…EEQLLNLKNE (81 aa). The Nuclear localization signal signature appears at 1091 to 1105; it reads RRRRLLSEKEERRKE.

In terms of assembly, component of the KNL1/SPC105 complex composed of at least spc7 and sos7. Part of the outer kinetochore KMN network that includes the KNL1, MIS12 and NDC80 complexes. Interacts (via C-terminus) with sos7 (via C-terminus); the interaction is direct. Interacts (when phosphorylated on MELT motifs) with bub1 and bub3; to recruit the BUB1-BUB3 complex to the kinetochore. Phosphorylation of threonine residues in the MELT motifs by mph1/mps1 leads to recruitment of bub1 and bub3 to the kinetochore, and is required to maintain spindle assembly checkpoint signaling.

It localises to the nucleus. It is found in the chromosome. The protein resides in the centromere. The protein localises to the kinetochore. Its function is as follows. Acts as a component of the outer kinetochore KNL1 complex that serves as a docking point for spindle assembly checkpoint components and mediates microtubule-kinetochore interactions. Kinetochores, consisting of a centromere-associated inner segment and a microtubule-contacting outer segment, play a crucial role in chromosome segregation by mediating the physical connection between centromeric DNA and spindle microtubules. The outer kinetochore is made up of the ten-subunit KMN network, comprising the MIS12, NDC80 and KNL1 complexes, and auxiliary microtubule-associated components; together they connect the outer kinetochore with the inner kinetochore, bind microtubules, and mediate interactions with mitotic checkpoint proteins that delay anaphase until chromosomes are bioriented on the spindle. Recruits the BUB1-BUB3 complex to kinetochores when phosphorylated by mph1/mps1, to support spindle assembly checkpoint signaling. Functions both in mitotic and in meiotic chromosome segregation. This is Outer kinetochore KNL1 complex subunit spc7 from Schizosaccharomyces pombe (strain 972 / ATCC 24843) (Fission yeast).